The sequence spans 101 residues: Large ribosomal subunit protein P1 (101 aa).

Over residues 61 to 72 (AAPAAAAAPAAA) the composition is skewed to low complexity. Residues 61-101 (AAPAAAAAPAAAEEAEEEAEEEEEEEEAEEEAAAGLGALFG) form a disordered region. Over residues 73–92 (EEAEEEAEEEEEEEEAEEEA) the composition is skewed to acidic residues.

This sequence belongs to the eukaryotic ribosomal protein P1/P2 family. In terms of assembly, part of the 50S ribosomal subunit. Homodimer, it forms part of the ribosomal stalk which helps the ribosome interact with GTP-bound translation factors. Forms a heptameric uL10/P0(P1)2(P1)2(P1)2 complex, where uL10/P0 forms an elongated spine to which the P1 dimers bind in a sequential fashion.

Forms part of the ribosomal stalk, playing a central role in the interaction of the ribosome with GTP-bound translation factors. The polypeptide is Large ribosomal subunit protein P1 (Methanothermobacter thermautotrophicus (strain ATCC 29096 / DSM 1053 / JCM 10044 / NBRC 100330 / Delta H) (Methanobacterium thermoautotrophicum)).